Reading from the N-terminus, the 999-residue chain is Ulvan lyase, long isoform (999 aa).

An N-terminal signal peptide occupies residues 1 to 21 (MKCLKTLLVSTTLLGAFSLNA). 126-127 (SH) is a binding site for substrate. Residue His127 is the Proton donor/acceptor of the active site. Ca(2+) is bound by residues Asp189, Asp199, and Lys201. The substrate site is built by Tyr280 and Arg297. Residues Asp300, Asp303, and Tyr305 each contribute to the Ca(2+) site. Position 361 (Tyr361) interacts with substrate.

The protein belongs to the polysaccharide lyase 24 family.

Ulvan lyase involved in ulvan degradation. Ulvan is the main polysaccharide component of the Ulvales (green seaweed) cell wall. It is composed of disaccharide building blocks comprising 3-sulfated rhamnose (Rha3S) linked to D-glucuronic acid (GlcA), L-iduronic acid (IduA), or D-xylose (Xyl). Ulvan lyase catalyzes preferentially the endolytic cleavage of the glycosidic bond between Rha3S and the uronic acid GlcA, but not IduA, producing oligosaccharides that have unsaturated 4-deoxy-L-threo-hex-4-enopyranosiduronic acid (deltaUA) at the non-reducing end. The most abundant end products in the degradation of the ulvan polysaccharide were deltaUA-Rha3S disaccharides and deltaUA-Rha3S-IduA-Rha3S and deltaUA-Rha3S-Xyl-Rha3S tetrasaccharides. This chain is Ulvan lyase, long isoform, found in Alteromonas sp.